Reading from the N-terminus, the 130-residue chain is Cystatin (130 aa).

Residues Met-1–Ala-19 form the signal peptide. The Secondary area of contact motif lies at Gln-67–Gly-71. 2 cysteine pairs are disulfide-bonded: Cys-85–Cys-94 and Cys-108–Cys-128.

Belongs to the cystatin family. As to expression, ubiquitous expression including brain, white muscle, heart, gill, kidney, spleen, liver and skin with the highest and lowest level in brain and gill, respectively.

It is found in the secreted. Cysteine proteinase inhibitor. In Oncorhynchus keta (Chum salmon), this protein is Cystatin.